We begin with the raw amino-acid sequence, 222 residues long: Small ribosomal subunit protein eS1 (222 aa).

Belongs to the eukaryotic ribosomal protein eS1 family.

The chain is Small ribosomal subunit protein eS1 from Methanocaldococcus jannaschii (strain ATCC 43067 / DSM 2661 / JAL-1 / JCM 10045 / NBRC 100440) (Methanococcus jannaschii).